The primary structure comprises 273 residues: Undecaprenyl-diphosphatase (273 aa).

7 helical membrane-spanning segments follow: residues leucine 54–isoleucine 74, leucine 90–histidine 110, leucine 116–alanine 136, glutamine 156–threonine 178, tyrosine 190–leucine 210, alanine 222–isoleucine 242, and isoleucine 252–phenylalanine 272.

It belongs to the UppP family.

It is found in the cell inner membrane. The catalysed reaction is di-trans,octa-cis-undecaprenyl diphosphate + H2O = di-trans,octa-cis-undecaprenyl phosphate + phosphate + H(+). In terms of biological role, catalyzes the dephosphorylation of undecaprenyl diphosphate (UPP). Confers resistance to bacitracin. This Salmonella paratyphi A (strain ATCC 9150 / SARB42) protein is Undecaprenyl-diphosphatase.